The primary structure comprises 202 residues: MTPLGRLHLLRVLSTPPVFLLGLLLALPLGAQGLSGVRFSASRTAHQPPQKHLTHGLLKPAAHLVGYPSKQNSLLWRANTDRAFLRHGFSLNNNSLLIPTSGLYFVYSQVVFSGESCSPRAIPTPIYLAHEVQLFSSQYPFHVPLLSAQKSVYPGLQGPWVRSMYQGAVFLLSKGDQLSTHTDGISHLHFSPSTVFFGAFAL.

The signal sequence occupies residues 1-33; that stretch reads MTPLGRLHLLRVLSTPPVFLLGLLLALPLGAQG. The THD domain occupies 60–202; sequence PAAHLVGYPS…STVFFGAFAL (143 aa). N93 carries an N-linked (GlcNAc...) asparagine glycan.

The protein belongs to the tumor necrosis factor family. Homotrimer, and heterotrimer of either two LTB and one LTA subunits or (less prevalent) two LTA and one LTB subunits. Interacts with TNFRSF14.

The protein resides in the secreted. It is found in the membrane. Its function is as follows. Cytokine that in its homotrimeric form binds to TNFRSF1A/TNFR1, TNFRSF1B/TNFBR and TNFRSF14/HVEM. In its heterotrimeric form with LTB binds to TNFRSF3/LTBR. Lymphotoxin is produced by lymphocytes and is cytotoxic for a wide range of tumor cells in vitro and in vivo. This is Lymphotoxin-alpha (Lta) from Rattus norvegicus (Rat).